We begin with the raw amino-acid sequence, 566 residues long: Oxygen-dependent choline dehydrogenase (566 aa).

7 to 36 (DYIICGAGSAGNVLATRLTEDPDVTVLLLE) serves as a coordination point for FAD. The segment at 180–202 (NGYQQEGFGPMDRTVTPKGRRAS) is disordered. Residue H474 is the Proton acceptor of the active site.

This sequence belongs to the GMC oxidoreductase family. FAD serves as cofactor.

The catalysed reaction is choline + A = betaine aldehyde + AH2. It catalyses the reaction betaine aldehyde + NAD(+) + H2O = glycine betaine + NADH + 2 H(+). Its pathway is amine and polyamine biosynthesis; betaine biosynthesis via choline pathway; betaine aldehyde from choline (cytochrome c reductase route): step 1/1. Its function is as follows. Involved in the biosynthesis of the osmoprotectant glycine betaine. Catalyzes the oxidation of choline to betaine aldehyde and betaine aldehyde to glycine betaine at the same rate. The protein is Oxygen-dependent choline dehydrogenase of Burkholderia lata (strain ATCC 17760 / DSM 23089 / LMG 22485 / NCIMB 9086 / R18194 / 383).